Consider the following 168-residue polypeptide: MVEDILAPGLRVVFCGINPGLSSAGTGFPFAHPANRFWKVIYQAGFTDRQLKPQEAQHLLDYRCGVTKLVDRPTVQANEVSKQELHAGGRKLIEKIEDYQPQALAILGKQAYEQGFSQRGAQWGKQTLTIGSTQIWVLPNPSGLSRVSLEKLVEAYRELDQALVVRGR.

The protein belongs to the uracil-DNA glycosylase (UDG) superfamily. TDG/mug family. Binds DNA as a monomer.

Its subcellular location is the cytoplasm. It catalyses the reaction Specifically hydrolyzes mismatched double-stranded DNA and polynucleotides, releasing free uracil.. Excises ethenocytosine and uracil, which can arise by alkylation or deamination of cytosine, respectively, from the corresponding mispairs with guanine in ds-DNA. It is capable of hydrolyzing the carbon-nitrogen bond between the sugar-phosphate backbone of the DNA and the mispaired base. The complementary strand guanine functions in substrate recognition. Required for DNA damage lesion repair in stationary-phase cells. This is G/U mismatch-specific DNA glycosylase from Escherichia coli (strain UTI89 / UPEC).